We begin with the raw amino-acid sequence, 468 residues long: Glycosyl hydrolase family 109 protein (468 aa).

The first 19 residues, 1–19, serve as a signal peptide directing secretion; the sequence is MVYKVFLSLCIGLALSASA. Residues 67–68, Asp89, 138–141, 158–159, and Asn187 contribute to the NAD(+) site; these read MR, WKTH, and EV. Residues Tyr216, Arg232, 244-247, and Tyr322 contribute to the substrate site; that span reads YATH. Tyr244 contributes to the NAD(+) binding site.

This sequence belongs to the Gfo/Idh/MocA family. Glycosyl hydrolase 109 subfamily. Requires NAD(+) as cofactor.

In terms of biological role, glycosidase. In Porphyromonas gingivalis (strain ATCC BAA-308 / W83), this protein is Glycosyl hydrolase family 109 protein.